Here is an 80-residue protein sequence, read N- to C-terminus: uncharacterized protein (80 aa).

The tract at residues 57-80 is disordered; it reads GNIDSDVSDQDQIGNPSAPISNQI.

This is an uncharacterized protein from Bacillus subtilis (strain 168).